A 226-amino-acid polypeptide reads, in one-letter code: Ribonuclease 3 (226 aa).

Residues Ile5–Gly127 enclose the RNase III domain. A Mg(2+)-binding site is contributed by Glu40. The active site involves Asp44. The Mg(2+) site is built by Asp113 and Glu116. The active site involves Glu116. One can recognise a DRBM domain in the interval Asp154–Ser224.

It belongs to the ribonuclease III family. In terms of assembly, homodimer. Mg(2+) serves as cofactor.

The protein localises to the cytoplasm. The catalysed reaction is Endonucleolytic cleavage to 5'-phosphomonoester.. Its function is as follows. Digests double-stranded RNA. Involved in the processing of primary rRNA transcript to yield the immediate precursors to the large and small rRNAs (23S and 16S). Processes some mRNAs, and tRNAs when they are encoded in the rRNA operon. Processes pre-crRNA and tracrRNA of type II CRISPR loci if present in the organism. In Xanthomonas oryzae pv. oryzae (strain KACC10331 / KXO85), this protein is Ribonuclease 3.